The primary structure comprises 484 residues: Protein nucleotidyltransferase YdiU (484 aa).

Gly-81, Gly-83, Arg-84, Lys-103, Asp-115, Gly-116, Arg-166, and Arg-173 together coordinate ATP. The Proton acceptor role is filled by Asp-244. 2 residues coordinate Mg(2+): Asn-245 and Asp-254. Asp-254 is an ATP binding site.

The protein belongs to the SELO family. Mg(2+) serves as cofactor. The cofactor is Mn(2+).

It carries out the reaction L-seryl-[protein] + ATP = 3-O-(5'-adenylyl)-L-seryl-[protein] + diphosphate. It catalyses the reaction L-threonyl-[protein] + ATP = 3-O-(5'-adenylyl)-L-threonyl-[protein] + diphosphate. The catalysed reaction is L-tyrosyl-[protein] + ATP = O-(5'-adenylyl)-L-tyrosyl-[protein] + diphosphate. The enzyme catalyses L-histidyl-[protein] + UTP = N(tele)-(5'-uridylyl)-L-histidyl-[protein] + diphosphate. It carries out the reaction L-seryl-[protein] + UTP = O-(5'-uridylyl)-L-seryl-[protein] + diphosphate. It catalyses the reaction L-tyrosyl-[protein] + UTP = O-(5'-uridylyl)-L-tyrosyl-[protein] + diphosphate. Its function is as follows. Nucleotidyltransferase involved in the post-translational modification of proteins. It can catalyze the addition of adenosine monophosphate (AMP) or uridine monophosphate (UMP) to a protein, resulting in modifications known as AMPylation and UMPylation. In Shewanella loihica (strain ATCC BAA-1088 / PV-4), this protein is Protein nucleotidyltransferase YdiU.